The sequence spans 463 residues: Elongation factor 1-alpha 2 (463 aa).

Position 2 is a n,N,N-trimethylglycine (G2). The tr-type G domain maps to 5 to 242 (KTHINIVVIG…DTILPPTRPT (238 aa)). The G1 stretch occupies residues 14 to 21 (GHVDSGKS). Positions 17, 18, 19, 20, 21, and 22 each coordinate GTP. D17 contacts Mg(2+). N6,N6,N6-trimethyllysine; alternate is present on K36. N6,N6-dimethyllysine; alternate is present on K36. K36 is modified (N6-methyllysine; alternate). K55 carries the post-translational modification N6,N6,N6-trimethyllysine. Position 55 is an N6,N6-dimethyllysine (K55). The tract at residues 70-74 (GITID) is G2. N6,N6,N6-trimethyllysine is present on K79. Residues 91–94 (DAPG) are G3. The GTP site is built by N153, K154, and D156. A G4 region spans residues 153-156 (NKMD). Phosphoserine is present on S163. K165 bears the N6,N6-dimethyllysine; alternate mark. At K165 the chain carries N6-methyllysine; alternate. N6,N6,N6-trimethyllysine; alternate; by EEF1AKMT3 is present on K165. K179 carries the N6-acetyllysine modification. GTP contacts are provided by S194, G195, and W196. The interval 194–196 (SGW) is G5. S224 bears the Phosphoserine mark. T239 carries the phosphothreonine modification. 5-glutamyl glycerylphosphorylethanolamine occurs at positions 301 and 374. K439 carries the post-translational modification N6-acetyllysine. The tract at residues 444–463 (KSGGAGKVTKSAQKAQKAGK) is disordered.

It belongs to the TRAFAC class translation factor GTPase superfamily. Classic translation factor GTPase family. EF-Tu/EF-1A subfamily. Homodimer; arranged in a 'head to tail' dimer configuration. Post-translationally, trimethylated at Lys-165 by EEF1AKMT3. Mono-, di-, and trimethylated at Lys-36 by EEF1AKMT4; trimethylated form is predominant. Methylation by EEF1AKMT4 contributes to the fine-tuning of translation rates for a subset of tRNAs. Trimethylated at the N-terminus and dimethylated at Lys-55 by METTL13.

It localises to the endoplasmic reticulum membrane. It catalyses the reaction GTP + H2O = GDP + phosphate + H(+). Translation elongation factor that catalyzes the GTP-dependent binding of aminoacyl-tRNA (aa-tRNA) to the A-site of ribosomes during the elongation phase of protein synthesis. Base pairing between the mRNA codon and the aa-tRNA anticodon promotes GTP hydrolysis, releasing the aa-tRNA from EEF1A1 and allowing its accommodation into the ribosome. The growing protein chain is subsequently transferred from the P-site peptidyl tRNA to the A-site aa-tRNA, extending it by one amino acid through ribosome-catalyzed peptide bond formation. The protein is Elongation factor 1-alpha 2 (EEF1A2) of Bos taurus (Bovine).